Reading from the N-terminus, the 224-residue chain is UPF0173 metal-dependent hydrolase EAT1b_0495 (224 aa).

This sequence belongs to the UPF0173 family.

This is UPF0173 metal-dependent hydrolase EAT1b_0495 from Exiguobacterium sp. (strain ATCC BAA-1283 / AT1b).